Consider the following 617-residue polypeptide: Serine/threonine-protein kinase par-4 (617 aa).

Over residues Met-1–Gln-11 the composition is skewed to polar residues. The tract at residues Met-1–Asp-59 is disordered. Acidic residues predominate over residues Pro-46 to Phe-57. In terms of domain architecture, Protein kinase spans Tyr-183–Phe-446. Residues Ile-189–Val-197 and Lys-212 each bind ATP. The active-site Proton acceptor is Asp-310. The segment at Leu-523–Ala-617 is disordered. Positions Asp-587–Pro-597 are enriched in pro residues.

Belongs to the protein kinase superfamily. CAMK Ser/Thr protein kinase family. LKB1 subfamily. In terms of assembly, interacts with strd-1. Requires Mg(2+) as cofactor. It depends on Mn(2+) as a cofactor. Expressed in the gonads, oocytes and early embryos (at protein level).

The protein localises to the cytoplasm. It is found in the cell cortex. The catalysed reaction is L-seryl-[protein] + ATP = O-phospho-L-seryl-[protein] + ADP + H(+). It carries out the reaction L-threonyl-[protein] + ATP = O-phospho-L-threonyl-[protein] + ADP + H(+). In terms of biological role, required for cytoplasmic partitioning and asymmetric cell division in early embryogenesis. Controls the asymmetric cell division of the Q.p neuroblast lineage. Involved in mediating cell polarization via regulation of anillin family scaffold proteins. Phosphorylates and restricts the asymmetry effectors mex-5 and mex-6 to the anterior cytoplasm of the zygote and maintains these phosphorylations until fertilization. May phosphorylate par-1. Required for strd-1 localization to the cell cortex of early embryos and may be required for strd-1 protein stabilization. May regulate the integrity of the early embryonic cortex in a strd-1-dependent manner. Phosphorylates and regulates aak-2 in response to oxidative stress and during dauer development. May also play a role in motility, behavioral response, regulation of lifespan and dauer formation through this pathway. Required to establish germline stem cell (GSC) quiescence during dauer development. Acts downstream of unc-40 in dendrite outgrowth. May play a role in cell shedding during embryogenesis, probably by phosphorylating pig-1. The chain is Serine/threonine-protein kinase par-4 (par-4) from Caenorhabditis elegans.